The primary structure comprises 284 residues: UPF0276 protein PA14_21580 (284 aa).

Belongs to the UPF0276 family.

In Pseudomonas aeruginosa (strain UCBPP-PA14), this protein is UPF0276 protein PA14_21580.